A 146-amino-acid polypeptide reads, in one-letter code: Multiple coagulation factor deficiency protein 2 (146 aa).

An N-terminal signal peptide occupies residues 1 to 26 (MTMRSLLRTPFLCGLLWAFCAPGARA). In terms of domain architecture, EF-hand 1 spans 68–103 (SPQELQLHYFKMHDYDGNNLLDGLELSTAITHVHKE). 4 residues coordinate Ca(2+): D81, D83, N85, and E92. At S106 the chain carries Phosphoserine. An EF-hand 2 domain is found at 116 to 146 (ELINIIDGVLRDDDKNNDGYIDYAEFAKSLQ). Residues D129, N131, D133, Y135, and E140 each contribute to the Ca(2+) site.

Interacts in a calcium-dependent manner with LMAN1.

It is found in the endoplasmic reticulum-Golgi intermediate compartment. The protein resides in the endoplasmic reticulum. The protein localises to the golgi apparatus. Its function is as follows. The MCFD2-LMAN1 complex forms a specific cargo receptor for the ER-to-Golgi transport of selected proteins. Plays a role in the secretion of coagulation factors. The chain is Multiple coagulation factor deficiency protein 2 (MCFD2) from Homo sapiens (Human).